Here is a 337-residue protein sequence, read N- to C-terminus: MRGLLQDIPVRGQKRVLLAAPRGYCAGVDRAVIAVEKALERYGAPVYVRKQIVHNIHVVSELERQGAIFVDEVDEVPEGAHIVFSAHGVSPAVVAAAADRGLRAIDATCPLVTKVHREAVRFARDDFEILLIGHEGHEEVEGTAGHAPERVTLVNSPDEADTIEVKDPDRVVWLSQTTLSVDETMETVRRLRERFPNLQNPPSDDICYATQNRQVAIKKVAQSADLVIVVGSANSSNSVRLVEVALEYGAKAAYRVDYASEIRQEWLDGVATVGVTSGASVPEVLVQEVLADLAGAGYADVQEVKTAEEDLMFSLPKELRKDIAGKRDERALGGRRS.

Cysteine 25 contributes to the [4Fe-4S] cluster binding site. Residues histidine 54 and histidine 87 each contribute to the (2E)-4-hydroxy-3-methylbut-2-enyl diphosphate site. Residues histidine 54 and histidine 87 each contribute to the dimethylallyl diphosphate site. Residues histidine 54 and histidine 87 each coordinate isopentenyl diphosphate. Residue cysteine 109 participates in [4Fe-4S] cluster binding. Histidine 137 is a binding site for (2E)-4-hydroxy-3-methylbut-2-enyl diphosphate. A dimethylallyl diphosphate-binding site is contributed by histidine 137. Histidine 137 provides a ligand contact to isopentenyl diphosphate. The Proton donor role is filled by glutamate 139. Threonine 177 is a (2E)-4-hydroxy-3-methylbut-2-enyl diphosphate binding site. Cysteine 207 contacts [4Fe-4S] cluster. (2E)-4-hydroxy-3-methylbut-2-enyl diphosphate is bound by residues serine 235, serine 236, asparagine 237, and serine 280. 4 residues coordinate dimethylallyl diphosphate: serine 235, serine 236, asparagine 237, and serine 280. Isopentenyl diphosphate-binding residues include serine 235, serine 236, asparagine 237, and serine 280.

This sequence belongs to the IspH family. [4Fe-4S] cluster serves as cofactor.

It carries out the reaction isopentenyl diphosphate + 2 oxidized [2Fe-2S]-[ferredoxin] + H2O = (2E)-4-hydroxy-3-methylbut-2-enyl diphosphate + 2 reduced [2Fe-2S]-[ferredoxin] + 2 H(+). The catalysed reaction is dimethylallyl diphosphate + 2 oxidized [2Fe-2S]-[ferredoxin] + H2O = (2E)-4-hydroxy-3-methylbut-2-enyl diphosphate + 2 reduced [2Fe-2S]-[ferredoxin] + 2 H(+). It functions in the pathway isoprenoid biosynthesis; dimethylallyl diphosphate biosynthesis; dimethylallyl diphosphate from (2E)-4-hydroxy-3-methylbutenyl diphosphate: step 1/1. The protein operates within isoprenoid biosynthesis; isopentenyl diphosphate biosynthesis via DXP pathway; isopentenyl diphosphate from 1-deoxy-D-xylulose 5-phosphate: step 6/6. In terms of biological role, catalyzes the conversion of 1-hydroxy-2-methyl-2-(E)-butenyl 4-diphosphate (HMBPP) into a mixture of isopentenyl diphosphate (IPP) and dimethylallyl diphosphate (DMAPP). Acts in the terminal step of the DOXP/MEP pathway for isoprenoid precursor biosynthesis. This is 4-hydroxy-3-methylbut-2-enyl diphosphate reductase from Leifsonia xyli subsp. xyli (strain CTCB07).